The chain runs to 70 residues: Large ribosomal subunit protein bL31 (70 aa).

The Zn(2+) site is built by cysteine 16, cysteine 18, cysteine 37, and cysteine 40.

The protein belongs to the bacterial ribosomal protein bL31 family. Type A subfamily. In terms of assembly, part of the 50S ribosomal subunit. It depends on Zn(2+) as a cofactor.

Its function is as follows. Binds the 23S rRNA. The polypeptide is Large ribosomal subunit protein bL31 (Shewanella baltica (strain OS223)).